Here is a 319-residue protein sequence, read N- to C-terminus: Biotin synthase (319 aa).

The Radical SAM core domain maps to 44-273 (IHGDGIDLCS…EAKIRLAGGR (230 aa)). The [4Fe-4S] cluster site is built by cysteine 62, cysteine 66, and cysteine 69. [2Fe-2S] cluster-binding residues include serine 106, cysteine 138, cysteine 198, and arginine 268.

The protein belongs to the radical SAM superfamily. Biotin synthase family. In terms of assembly, homodimer. [4Fe-4S] cluster serves as cofactor. [2Fe-2S] cluster is required as a cofactor.

The catalysed reaction is (4R,5S)-dethiobiotin + (sulfur carrier)-SH + 2 reduced [2Fe-2S]-[ferredoxin] + 2 S-adenosyl-L-methionine = (sulfur carrier)-H + biotin + 2 5'-deoxyadenosine + 2 L-methionine + 2 oxidized [2Fe-2S]-[ferredoxin]. It participates in cofactor biosynthesis; biotin biosynthesis; biotin from 7,8-diaminononanoate: step 2/2. Its function is as follows. Catalyzes the conversion of dethiobiotin (DTB) to biotin by the insertion of a sulfur atom into dethiobiotin via a radical-based mechanism. The chain is Biotin synthase from Clostridium perfringens (strain ATCC 13124 / DSM 756 / JCM 1290 / NCIMB 6125 / NCTC 8237 / Type A).